Reading from the N-terminus, the 288-residue chain is MQQSTLLKPVSCYGIGVHSGKRTQLTIEPAKENTGIIFIRTDISSENNYIEASYFNVSDTLLSTTISNDHKVQISTIEHLMAALWGCSIDNAIIKIDGPEVPIMDGSSKPFVFMIECAGKKLQNAPKKYLKILKDIKVVHKDCELYCTPYDHMTVDLTIDFASKAIGRQNLTFSKQESFNQNIADARTFGFTKELDYLQSKGLAQGASFENAIGIDEQDKILNPNGLRYEDEFVRHKLLDLFGDLYTSGTSVVSSIKGYKTSHALNNELLHRIFSDTTSYKFVTNSEL.

Residues His79, His236, and Asp240 each coordinate Zn(2+). The active-site Proton donor is His263.

The protein belongs to the LpxC family. Requires Zn(2+) as cofactor.

It catalyses the reaction a UDP-3-O-[(3R)-3-hydroxyacyl]-N-acetyl-alpha-D-glucosamine + H2O = a UDP-3-O-[(3R)-3-hydroxyacyl]-alpha-D-glucosamine + acetate. The protein operates within glycolipid biosynthesis; lipid IV(A) biosynthesis; lipid IV(A) from (3R)-3-hydroxytetradecanoyl-[acyl-carrier-protein] and UDP-N-acetyl-alpha-D-glucosamine: step 2/6. Catalyzes the hydrolysis of UDP-3-O-myristoyl-N-acetylglucosamine to form UDP-3-O-myristoylglucosamine and acetate, the committed step in lipid A biosynthesis. This Rickettsia felis (strain ATCC VR-1525 / URRWXCal2) (Rickettsia azadi) protein is UDP-3-O-acyl-N-acetylglucosamine deacetylase.